The chain runs to 385 residues: 4-hydroxy-3-methylbut-2-en-1-yl diphosphate synthase (flavodoxin) 1 (385 aa).

[4Fe-4S] cluster contacts are provided by C280, C283, C315, and E322.

The protein belongs to the IspG family. [4Fe-4S] cluster serves as cofactor.

It catalyses the reaction (2E)-4-hydroxy-3-methylbut-2-enyl diphosphate + oxidized [flavodoxin] + H2O + 2 H(+) = 2-C-methyl-D-erythritol 2,4-cyclic diphosphate + reduced [flavodoxin]. It participates in isoprenoid biosynthesis; isopentenyl diphosphate biosynthesis via DXP pathway; isopentenyl diphosphate from 1-deoxy-D-xylulose 5-phosphate: step 5/6. Converts 2C-methyl-D-erythritol 2,4-cyclodiphosphate (ME-2,4cPP) into 1-hydroxy-2-methyl-2-(E)-butenyl 4-diphosphate. The chain is 4-hydroxy-3-methylbut-2-en-1-yl diphosphate synthase (flavodoxin) 1 from Streptomyces avermitilis (strain ATCC 31267 / DSM 46492 / JCM 5070 / NBRC 14893 / NCIMB 12804 / NRRL 8165 / MA-4680).